Here is a 364-residue protein sequence, read N- to C-terminus: MDRNQWTLALMALMRFAHRAFINPVSPLPKFSRLAFTQGASRLYATLHVDAGLQDNVVDKAAKPYLSRRLKFNAEHFKQDVSELCTTLNADYNEGVMNAVLNTYKENFERGAVLWKATSKEDGVAFRFYERKKVDVVGPAINNSLISGNHGMIPLITSWANFKKNAIASCDFDPAKGLCKTWIWLGGRHPTRDLLVAPNVPGTIRSLERKLISAGLHTVRHAAVDWRSSTVNLYFWVPRPLTLPVVNTLITLPGTPPINEEKLTLMKPFFKPNGFTFATTIDTATGKFKRVSFYALRLDGNNLPIMGDQLATFFKDAPSNDKTEMNIVAWSFAGGSNGSSNYIKGERSYIGDLEQVLDAWGSPI.

The first 22 residues, methionine 1 to isoleucine 22, serve as a signal peptide directing secretion. N-linked (GlcNAc...) asparagine glycans are attached at residues asparagine 142 and asparagine 337.

It belongs to the aromatic prenyltransferase family.

In terms of biological role, prenyltransferase that attaches isoprenoid moieties to carbon atoms of aromatic substrates in an enzyme-catalyzed Friedel-Crafts reaction. The sequence is that of Aromatic prenyltransferase from Talaromyces marneffei (strain ATCC 18224 / CBS 334.59 / QM 7333) (Penicillium marneffei).